We begin with the raw amino-acid sequence, 150 residues long: Large ribosomal subunit protein eL19 (150 aa).

The segment at isoleucine 55–methionine 89 is disordered.

It belongs to the eukaryotic ribosomal protein eL19 family. In terms of assembly, part of the 50S ribosomal subunit.

In terms of biological role, binds to the 23S rRNA. This chain is Large ribosomal subunit protein eL19, found in Pyrococcus furiosus (strain ATCC 43587 / DSM 3638 / JCM 8422 / Vc1).